A 276-amino-acid polypeptide reads, in one-letter code: Diaminopimelate epimerase (276 aa).

Positions 13, 46, and 66 each coordinate substrate. The active-site Proton donor is the cysteine 75. Substrate contacts are provided by residues 76–77 (GN), asparagine 159, asparagine 192, and 210–211 (ER). Catalysis depends on cysteine 219, which acts as the Proton acceptor. 220-221 (GT) is a binding site for substrate.

The protein belongs to the diaminopimelate epimerase family. As to quaternary structure, homodimer.

The protein localises to the cytoplasm. The catalysed reaction is (2S,6S)-2,6-diaminopimelate = meso-2,6-diaminopimelate. It functions in the pathway amino-acid biosynthesis; L-lysine biosynthesis via DAP pathway; DL-2,6-diaminopimelate from LL-2,6-diaminopimelate: step 1/1. Its function is as follows. Catalyzes the stereoinversion of LL-2,6-diaminopimelate (L,L-DAP) to meso-diaminopimelate (meso-DAP), a precursor of L-lysine and an essential component of the bacterial peptidoglycan. This Teredinibacter turnerae (strain ATCC 39867 / T7901) protein is Diaminopimelate epimerase.